The primary structure comprises 247 residues: Anionic trypsin (247 aa).

A signal peptide spans 1–15; that stretch reads MNPLLILAFLGAAVA. Residues 16 to 23 constitute a propeptide, activation peptide; sequence TPTDDDDK. A Peptidase S1 domain is found at 24 to 244; it reads IVGGYTCEEN…FVDWIQSTIA (221 aa). 6 cysteine pairs are disulfide-bonded: C30/C160, C48/C64, C132/C233, C139/C206, C171/C185, and C196/C220. The active-site Charge relay system is the H63. E75, N77, V80, and E85 together coordinate Ca(2+). D107 functions as the Charge relay system in the catalytic mechanism. The active-site Charge relay system is the S200.

The protein belongs to the peptidase S1 family. It depends on Ca(2+) as a cofactor.

It localises to the secreted. Its subcellular location is the extracellular space. It catalyses the reaction Preferential cleavage: Arg-|-Xaa, Lys-|-Xaa.. This chain is Anionic trypsin, found in Canis lupus familiaris (Dog).